A 484-amino-acid chain; its full sequence is Crt homolog 2 (484 aa).

The Cytoplasmic portion of the chain corresponds to 1–57 (MSEEKLPLLSPLNENDIENDYKDENLKSDLDKLSNVKKQSIIQRFKDYLKNSISKQT). The helical transmembrane segment at 58-78 (ATVLVYVVLYILSGVINSLLL) threads the bilayer. The Vacuolar segment spans residues 79-94 (KKVMNVFTNYGFFLNQ). A helical transmembrane segment spans residues 95–115 (LTNYGYVPIFGAIVLYKILFT). Residues 116-128 (NDIPKDTRSFPQW) lie on the Cytoplasmic side of the membrane. The chain crosses the membrane as a helical span at residues 129–149 (KFVIMGALDAVTGYFVVIGGI). Over 150 to 154 (KTTGP) the chain is Vacuolar. A helical transmembrane segment spans residues 155-175 (LQQLLNQSVIPFTMLLSFIFL). Residues 176–178 (KER) lie on the Cytoplasmic side of the membrane. The helical transmembrane segment at 179–199 (YSLIQLGGALIIIGGVVVSLI) threads the bilayer. Residues 200-210 (PSLTGGNTSGN) are Vacuolar-facing. N206 carries an N-linked (GlcNAc...) asparagine glycan. The chain crosses the membrane as a helical span at residues 211 to 231 (MLFYNFFYLISMIPYAFSNVY). The Cytoplasmic segment spans residues 232-244 (KAIGFSTVEDMDV). The helical transmembrane segment at 245 to 265 (WYLQYFDALYQSLVGTVLFPI) threads the bilayer. The Vacuolar segment spans residues 266-328 (NNWLPPPSDM…LGCDNCHGAW (63 aa)). N302 carries N-linked (GlcNAc...) asparagine glycosylation. A helical membrane pass occupies residues 329 to 349 (VVVLIYMAVNVLYNVFILLVL). The Cytoplasmic portion of the chain corresponds to 350-355 (KHAGAT). Residues 356 to 378 (VFSIANTLRLPLTNIAFSFKFIM) form a helical membrane-spanning segment. Residues 379-382 (GSDS) are Vacuolar-facing. The chain crosses the membrane as a helical span at residues 383-403 (NPFSGLSVAGLCIILLGLGGY). The Cytoplasmic segment spans residues 404–484 (RVGSMIKQKK…RNQNSIYGDQ (81 aa)).

This sequence belongs to the CRT-like transporter family.

The protein localises to the vacuole membrane. Functionally, nutrient transporter. Involved in maintaining the osmotic homeostasis of the digestive vacuole. The polypeptide is Crt homolog 2 (crtp2) (Dictyostelium discoideum (Social amoeba)).